The chain runs to 422 residues: Glutamyl-tRNA reductase (422 aa).

Substrate-binding positions include 49 to 52, S110, 115 to 117, and Q121; these read TCNR and EPQ. C50 serves as the catalytic Nucleophile. 190–195 is a binding site for NADP(+); the sequence is GAGETI.

The protein belongs to the glutamyl-tRNA reductase family. As to quaternary structure, homodimer.

It catalyses the reaction (S)-4-amino-5-oxopentanoate + tRNA(Glu) + NADP(+) = L-glutamyl-tRNA(Glu) + NADPH + H(+). It participates in porphyrin-containing compound metabolism; protoporphyrin-IX biosynthesis; 5-aminolevulinate from L-glutamyl-tRNA(Glu): step 1/2. Functionally, catalyzes the NADPH-dependent reduction of glutamyl-tRNA(Glu) to glutamate 1-semialdehyde (GSA). The chain is Glutamyl-tRNA reductase from Colwellia psychrerythraea (strain 34H / ATCC BAA-681) (Vibrio psychroerythus).